The sequence spans 545 residues: T-complex protein 1 subunit gamma (545 aa).

N-acetylmethionine is present on M1. Residues 1 to 24 (MMGHRPVLVLSQNTKRESGRKVQS) form a disordered region. Residue S11 is modified to Phosphoserine. Residue K15 forms a Glycyl lysine isopeptide (Lys-Gly) (interchain with G-Cter in SUMO2) linkage. G42 contributes to the ADP binding site. G42 contributes to the ATP binding site. D93 contacts Mg(2+). Positions 94, 95, 96, 97, 162, and 163 each coordinate ADP. ATP is bound by residues G94, T95, and T96. S170 is subject to Phosphoserine. An N6-acetyllysine modification is found at K222. Residues S243 and S244 each carry the phosphoserine modification. Y247 is modified (phosphotyrosine). Glycyl lysine isopeptide (Lys-Gly) (interchain with G-Cter in SUMO2) cross-links involve residues K248 and K249. Residue S252 is modified to Phosphoserine. The cysteines at positions 366 and 372 are disulfide-linked. Residue K381 forms a Glycyl lysine isopeptide (Lys-Gly) (interchain with G-Cter in SUMO2) linkage. G411 contributes to the ADP binding site. G411 lines the ATP pocket. Phosphothreonine is present on residues T430 and T459. The ADP site is built by G482, E483, E497, and K502. G482 serves as a coordination point for ATP. Position 497 (E497) interacts with ATP. The interval 526–545 (HKKKGDDQNRQTGAPDAGQE) is disordered.

The protein belongs to the TCP-1 chaperonin family. Component of the chaperonin-containing T-complex (TRiC), a hexadecamer composed of two identical back-to-back stacked rings enclosing a protein folding chamber. Each ring is made up of eight different subunits: TCP1/CCT1, CCT2, CCT3, CCT4, CCT5, CCT6A/CCT6, CCT7, CCT8. Interacts with PACRG. Interacts with DNAAF4. Interacts with DLEC1.

Its subcellular location is the cytoplasm. It carries out the reaction ATP + H2O = ADP + phosphate + H(+). Its function is as follows. Component of the chaperonin-containing T-complex (TRiC), a molecular chaperone complex that assists the folding of actin, tubulin and other proteins upon ATP hydrolysis. The TRiC complex mediates the folding of WRAP53/TCAB1, thereby regulating telomere maintenance. As part of the TRiC complex may play a role in the assembly of BBSome, a complex involved in ciliogenesis regulating transports vesicles to the cilia. This is T-complex protein 1 subunit gamma (Cct3) from Rattus norvegicus (Rat).